The primary structure comprises 143 residues: Anti-sigma F factor (143 aa).

It belongs to the anti-sigma-factor family.

It catalyses the reaction L-seryl-[protein] + ATP = O-phospho-L-seryl-[protein] + ADP + H(+). The catalysed reaction is L-threonyl-[protein] + ATP = O-phospho-L-threonyl-[protein] + ADP + H(+). In terms of biological role, binds to sigma F and blocks its ability to form an RNA polymerase holoenzyme (E-sigma F). Phosphorylates SpoIIAA on a serine residue. This phosphorylation may enable SpoIIAA to act as an anti-anti-sigma factor that counteracts SpoIIAB and thus releases sigma F from inhibition. The sequence is that of Anti-sigma F factor from Thermoanaerobacter pseudethanolicus (strain ATCC 33223 / 39E) (Clostridium thermohydrosulfuricum).